We begin with the raw amino-acid sequence, 492 residues long: Cytoplasmic dynein 1 light intermediate chain 2 (492 aa).

61 to 68 (GEDGSGKT) contacts ATP. 3 disordered regions span residues 187–206 (PEEGCQGSPQRRGPLTSGSD), 371–423 (AKQP…KNNA), and 437–492 (LSKK…ENEA). Phosphoserine is present on S194. Polar residues predominate over residues 371-381 (AKQPATPTRAS). Phosphoserine occurs at positions 383 and 391. Residue R397 is modified to Omega-N-methylarginine. Residues 400–412 (PASVPSSSPGTSV) are compositionally biased toward low complexity. T441 carries the phosphothreonine modification. Phosphoserine occurs at positions 443 and 446. The span at 452–469 (VQSTAKKSGQKTVLSNVQ) shows a compositional bias: polar residues. Residues 471-480 (ELDRMTRKPD) show a composition bias toward basic and acidic residues. Over residues 482-492 (MVTNSSTENEA) the composition is skewed to polar residues.

Belongs to the dynein light intermediate chain family. Homodimer. The cytoplasmic dynein 1 complex consists of two catalytic heavy chains (HCs) and a number of non-catalytic subunits presented by intermediate chains (ICs), light intermediate chains (LICs) and light chains (LCs); the composition seems to vary in respect to the IC, LIC and LC composition. The heavy chain homodimer serves as a scaffold for the probable homodimeric assembly of the respective non-catalytic subunits. The ICs and LICs bind directly to the HC dimer and the LCs assemble on the IC dimer. Interacts with DYNC1H1; DYNC1LI1 and DYNC1LI2 bind mutually exclusive to DYNC1H.

The protein localises to the cytoplasm. The protein resides in the cytoskeleton. Its function is as follows. Acts as one of several non-catalytic accessory components of the cytoplasmic dynein 1 complex that are thought to be involved in linking dynein to cargos and to adapter proteins that regulate dynein function. Cytoplasmic dynein 1 acts as a motor for the intracellular retrograde motility of vesicles and organelles along microtubules. May play a role in binding dynein to membranous organelles or chromosomes. The protein is Cytoplasmic dynein 1 light intermediate chain 2 of Homo sapiens (Human).